The primary structure comprises 530 residues: MPSSLEKLSTNRVKLTIEMPFDELKPSLDKAYKDIANQVNVPGFRKGKVPAPVIDQRFGRGVVLQEAINDALPAAYGKAIEENTVVPLGQPEIEVTKLEDGEVVEFTAEVDVRPDFDLPDVSAISVEVPAVEVPDEDVDERVETLRQRFATNTEVERAAAKDDLVTIDLAGTRDGEVLEDATASGVTYKVGSEGMLEGLDEAVTGLKAGESAEFHSTLVGGPLRGQDADIKVTVTKVCEQELPAVDDDFAQLVSQFDTVDEMRADLRTALENMARLDQAADARDKVLEEVISKIDIELPTNLIDSELEARRQQVNQQLAQAGMTVEEYLEDSEEEVDNADDFWAEIEKRSLDALKAQIVLDKMADDDEIGVEQNELTELLFRKAQQNGTSPEEEAQHMMQHNHLPDWMQEIRRGKALASMVGAATVTDSKGNALELDRIQPDGTIADKQAEEDAPAEDSAEKADGKATEESKAEEKAPAKKATTKKISAKKSAGAKATTKKVVDAKSDDKPAAKKPAPKKKTAAKDDKSK.

Residues 162 to 243 form the PPIase FKBP-type domain; sequence DDLVTIDLAG…VTKVCEQELP (82 aa). The disordered stretch occupies residues 432-530; the sequence is NALELDRIQP…KTAAKDDKSK (99 aa). Composition is skewed to basic and acidic residues over residues 459 to 478 and 501 to 512; these read SAEK…EKAP and KVVDAKSDDKPA.

Belongs to the FKBP-type PPIase family. Tig subfamily.

It localises to the cytoplasm. The catalysed reaction is [protein]-peptidylproline (omega=180) = [protein]-peptidylproline (omega=0). Its function is as follows. Involved in protein export. Acts as a chaperone by maintaining the newly synthesized protein in an open conformation. Functions as a peptidyl-prolyl cis-trans isomerase. This chain is Trigger factor, found in Cutibacterium acnes (strain DSM 16379 / KPA171202) (Propionibacterium acnes).